The following is a 207-amino-acid chain: Flavin-dependent thymidylate synthase (207 aa).

The 204-residue stretch at methionine 1–lysine 204 folds into the ThyX domain. Residues serine 50 and arginine 74 to arginine 76 each bind FAD. DUMP contacts are provided by residues glutamate 71–arginine 74, serine 84–arginine 86, and lysine 143. The ThyX motif signature appears at arginine 74 to serine 84. Residues asparagine 159–arginine 161 and asparagine 165 contribute to the FAD site. Arginine 170 is a dUMP binding site. Arginine 170 (involved in ionization of N3 of dUMP, leading to its activation) is an active-site residue.

The protein belongs to the thymidylate synthase ThyX family. Homotetramer. Requires FAD as cofactor.

It catalyses the reaction dUMP + (6R)-5,10-methylene-5,6,7,8-tetrahydrofolate + NADPH + H(+) = dTMP + (6S)-5,6,7,8-tetrahydrofolate + NADP(+). The protein operates within pyrimidine metabolism; dTTP biosynthesis. In terms of biological role, catalyzes the reductive methylation of 2'-deoxyuridine-5'-monophosphate (dUMP) to 2'-deoxythymidine-5'-monophosphate (dTMP) while utilizing 5,10-methylenetetrahydrofolate (mTHF) as the methyl donor, and NADPH and FADH(2) as the reductant. The protein is Flavin-dependent thymidylate synthase of Campylobacter jejuni subsp. jejuni serotype O:2 (strain ATCC 700819 / NCTC 11168).